The sequence spans 370 residues: Peptidyl-prolyl cis-trans isomerase D (370 aa).

Residue serine 5 is modified to Phosphoserine. The PPIase cyclophilin-type domain maps to 19 to 183 (FFDVDIGGER…KLCVIAECGE (165 aa)). Lysine 171 is subject to N6-acetyllysine. Residues 185–215 (KEGDDGGIFPKDGSGDSHPDFPEDADIDLKD) are chaperone activity. At serine 198 the chain carries Phosphoserine. The interval 214–370 (KDVDKILLIT…EKAVYAKMFA (157 aa)) is interaction with HSP90AB1. 3 TPR repeats span residues 223–256 (TEDL…VDSS), 273–306 (LSCV…DPSN), and 307–340 (TKAL…APED).

This sequence belongs to the cyclophilin-type PPIase family. PPIase D subfamily. As to quaternary structure, identified in ESR1 or NR3C1/GCR steroid receptor-chaperone complexes. Found in HSP90 chaperone complexes with kinase clients LCK or EIF2AK1. Two monomers associate with one HSP90 homodimer. Interacts with HSP90AA1. Interacts with HSP90AB1; PPID and FKBP4 compete for binding to HSP90AB1 and the interaction is mutually exclusive with the PPID:HSPA8 interaction. Interacts with HSPA8; PPID and STIP1 but not FKBP4 compete for binding to HSPA8 and the interaction is mutually exclusive with the PPID:HSP90AB1 interaction. Interacts with S100A1 and S100A2; the interactions dissociate the PPID:HSP90AA1 interaction. Interacts with S100A6. Interacts with MYB, ILF2, XRCC6, RACK1 and RPS3. Interacts with cytoplasmic dynein 1 intermediate chain (DYNC1I1 or DYNC1I2). Widely expressed.

The protein resides in the cytoplasm. The protein localises to the nucleus. It localises to the nucleolus. Its subcellular location is the nucleoplasm. It carries out the reaction [protein]-peptidylproline (omega=180) = [protein]-peptidylproline (omega=0). With respect to regulation, less sensitive to inhibition by cyclosporin A than is CYP-18. PPIase that catalyzes the cis-trans isomerization of proline imidic peptide bonds in oligopeptides and may therefore assist protein folding. Proposed to act as a co-chaperone in HSP90 complexes such as in unligated steroid receptors heterocomplexes. Different co-chaperones seem to compete for association with HSP90 thus establishing distinct HSP90-co-chaperone-receptor complexes with the potential to exert tissue-specific receptor activity control. May have a preference for estrogen receptor complexes and is not found in glucocorticoid receptor complexes. May be involved in cytoplasmic dynein-dependent movement of the receptor from the cytoplasm to the nucleus. May regulate MYB by inhibiting its DNA-binding activity. Involved in regulation of AHR signaling by promoting the formation of the AHR:ARNT dimer; the function is independent of HSP90 but requires the chaperone activity. Involved in regulation of UV radiation-induced apoptosis. Promotes cell viability in anaplastic lymphoma kinase-positive anaplastic large-cell lymphoma (ALK+ ALCL) cell lines. Its function is as follows. (Microbial infection) May be involved in hepatitis C virus (HCV) replication and release. This chain is Peptidyl-prolyl cis-trans isomerase D, found in Homo sapiens (Human).